An 83-amino-acid chain; its full sequence is Protein MATERNALLY EXPRESSED GENE 3 (83 aa).

Residues 1-22 (MQWLAFVAPRWRCVCDQELSAQ) form the signal peptide. A disulfide bridge connects residues cysteine 60 and cysteine 82.

It belongs to the MEG family. Expressed in endosperm, anther and pollen.

This Zea mays (Maize) protein is Protein MATERNALLY EXPRESSED GENE 3 (MEG3).